A 283-amino-acid polypeptide reads, in one-letter code: Tetrahydroxynaphthalene reductase (283 aa).

The tract at residues 1–21 (MPAVTQPRGESKYDAIPGPLG) is disordered. 39 to 63 (RGIGREMAMELGRRGCKVIVNYANS) contributes to the NADP(+) binding site. Ser164 contributes to the substrate binding site. The active-site Proton acceptor is the Tyr178.

The protein belongs to the short-chain dehydrogenases/reductases (SDR) family. In terms of assembly, homotetramer.

It catalyses the reaction scytalone + NADP(+) = naphthalene-1,3,6,8-tetrol + NADPH + H(+). The protein operates within pigment biosynthesis; melanin biosynthesis. Its function is as follows. Catalyzes the NADPH-dependent reduction of 1,3,6,8-tetrahydroxynaphthalene (T4HN) into (+)-scytalone and 1,3,8-trihydroxynaphthalene into (-)-vermelone. This enzyme is the biochemical target of several commercially important fungicides which are used to prevent blast disease in rice plants. In Pyricularia oryzae (strain 70-15 / ATCC MYA-4617 / FGSC 8958) (Rice blast fungus), this protein is Tetrahydroxynaphthalene reductase.